The sequence spans 463 residues: Quinolone resistance protein NorB (463 aa).

A run of 14 helical transmembrane segments spans residues 17 to 37 (IGIV…VNVV), 53 to 73 (IAVS…GGLA), 86 to 106 (IILN…LLLI), 107 to 127 (IGRL…LSII), 142 to 162 (YWSI…GAVA), 165 to 185 (LGWR…LFLI), 201 to 221 (FDIK…ILIT), 230 to 250 (SLLF…FIVL), 273 to 293 (TASN…NTFV), 299 to 319 (YSSL…LIMI), 334 to 354 (PMLI…LTFL), 357 to 377 (IFYV…LGIY), 403 to 423 (MASA…YAIV), and 435 to 455 (IALW…LLLV).

The protein belongs to the major facilitator superfamily. TCR/Tet family.

The protein resides in the cell membrane. Functionally, multidrug efflux pump that acts independently of NorA and is one of the factors that confers resistance against diverse quinolones and chemical compounds. This chain is Quinolone resistance protein NorB (norB), found in Staphylococcus aureus (strain USA300).